Reading from the N-terminus, the 222-residue chain is Phosphoribosylformylglycinamidine synthase subunit PurQ (222 aa).

Residues 2–222 (KAAVITFPGS…RALLGGMALV (221 aa)) enclose the Glutamine amidotransferase type-1 domain. Residue cysteine 86 is the Nucleophile of the active site. Active-site residues include histidine 194 and glutamate 196.

In terms of assembly, part of the FGAM synthase complex composed of 1 PurL, 1 PurQ and 2 PurS subunits.

The protein resides in the cytoplasm. The enzyme catalyses N(2)-formyl-N(1)-(5-phospho-beta-D-ribosyl)glycinamide + L-glutamine + ATP + H2O = 2-formamido-N(1)-(5-O-phospho-beta-D-ribosyl)acetamidine + L-glutamate + ADP + phosphate + H(+). It catalyses the reaction L-glutamine + H2O = L-glutamate + NH4(+). It functions in the pathway purine metabolism; IMP biosynthesis via de novo pathway; 5-amino-1-(5-phospho-D-ribosyl)imidazole from N(2)-formyl-N(1)-(5-phospho-D-ribosyl)glycinamide: step 1/2. Its function is as follows. Part of the phosphoribosylformylglycinamidine synthase complex involved in the purines biosynthetic pathway. Catalyzes the ATP-dependent conversion of formylglycinamide ribonucleotide (FGAR) and glutamine to yield formylglycinamidine ribonucleotide (FGAM) and glutamate. The FGAM synthase complex is composed of three subunits. PurQ produces an ammonia molecule by converting glutamine to glutamate. PurL transfers the ammonia molecule to FGAR to form FGAM in an ATP-dependent manner. PurS interacts with PurQ and PurL and is thought to assist in the transfer of the ammonia molecule from PurQ to PurL. The chain is Phosphoribosylformylglycinamidine synthase subunit PurQ from Cereibacter sphaeroides (strain ATCC 17023 / DSM 158 / JCM 6121 / CCUG 31486 / LMG 2827 / NBRC 12203 / NCIMB 8253 / ATH 2.4.1.) (Rhodobacter sphaeroides).